The following is a 336-amino-acid chain: tRNA N6-adenosine threonylcarbamoyltransferase (336 aa).

Fe cation contacts are provided by His-114 and His-118. Residues 136 to 140 (LVSGG), Asp-169, Gly-182, Asp-186, and Asn-275 each bind substrate. Asp-301 is a Fe cation binding site.

The protein belongs to the KAE1 / TsaD family. Fe(2+) serves as cofactor.

Its subcellular location is the cytoplasm. The catalysed reaction is L-threonylcarbamoyladenylate + adenosine(37) in tRNA = N(6)-L-threonylcarbamoyladenosine(37) in tRNA + AMP + H(+). Required for the formation of a threonylcarbamoyl group on adenosine at position 37 (t(6)A37) in tRNAs that read codons beginning with adenine. Is involved in the transfer of the threonylcarbamoyl moiety of threonylcarbamoyl-AMP (TC-AMP) to the N6 group of A37, together with TsaE and TsaB. TsaD likely plays a direct catalytic role in this reaction. This is tRNA N6-adenosine threonylcarbamoyltransferase from Streptococcus mutans serotype c (strain ATCC 700610 / UA159).